We begin with the raw amino-acid sequence, 168 residues long: Group 2 truncated hemoglobin 3-1 (168 aa).

His-98 lines the heme b pocket.

Belongs to the truncated hemoglobin family. Group II subfamily. In terms of assembly, homodimer when ferric. In terms of tissue distribution, mainly expressed in root nodules, but barely in leaves, roots, stems, flowers and fruits.

Functionally, hemoglobin-like protein that exhibits an unusual concentration-independent binding of O(2) and CO. Required for general plant development and during nodulation. May promote shoot organogenesis from root explants. The sequence is that of Group 2 truncated hemoglobin 3-1 from Lotus japonicus (Lotus corniculatus var. japonicus).